Reading from the N-terminus, the 447-residue chain is Tubulin beta chain (447 aa).

GTP-binding residues include Gln11, Glu69, Ser138, Gly142, Thr143, Gly144, Asn204, and Asn226. A Mg(2+)-binding site is contributed by Glu69. The interval Tyr425–Glu447 is disordered. Over residues Glu432 to Glu447 the composition is skewed to acidic residues.

This sequence belongs to the tubulin family. In terms of assembly, dimer of alpha and beta chains. A typical microtubule is a hollow water-filled tube with an outer diameter of 25 nm and an inner diameter of 15 nM. Alpha-beta heterodimers associate head-to-tail to form protofilaments running lengthwise along the microtubule wall with the beta-tubulin subunit facing the microtubule plus end conferring a structural polarity. Microtubules usually have 13 protofilaments but different protofilament numbers can be found in some organisms and specialized cells. It depends on Mg(2+) as a cofactor.

The protein resides in the cytoplasm. It is found in the cytoskeleton. Its function is as follows. Tubulin is the major constituent of microtubules, a cylinder consisting of laterally associated linear protofilaments composed of alpha- and beta-tubulin heterodimers. Microtubules grow by the addition of GTP-tubulin dimers to the microtubule end, where a stabilizing cap forms. Below the cap, tubulin dimers are in GDP-bound state, owing to GTPase activity of alpha-tubulin. This chain is Tubulin beta chain (tubA), found in Botryotinia fuckeliana (Noble rot fungus).